Reading from the N-terminus, the 564-residue chain is MTNVVETIKKQINEVVKNSISKAVQNGELPQFTVDELFIEIPKEKGHGDFSTNIAMQAAKTVRKAPRQVAEIIIKNMDLSNTYIDRVEAAGPGFINFFLTNAWLYDVLKVIQKEKENYGNLDIGRGQKVMVEFVSANPTGPLHMGNARGGALGDCIASVLEKAGYDVTREFYINDAGNQIEKFGISLEARYIQLLKGEDAVEFPEDGYHGEDIIDHMKAYIEENGDNLLYVDSEERRKTLVEYALPKNIERIRKSLENYGVVFDVWFSEQSLYDNGEVRETLDILKEKGYTFEKDGAVWFKASALGAEKDEVIVRNNGIPTYFAADIAYHRNKFLKRKFDRVINLLGADHHGHAARMKCALKAFDIDPDKLDIVIFQLVRLYRNGEIARMSKRTGRAISLDDLLEEVGRDAARFFFNTKASGSHLDFDLDLAVKKSNENPVYYVQYAYARSCSMLRLLESEGFKVPDVDSVDLTVLKAPEEIELMKKLSEYPEEIRISAQTLEPSRLTRYVLDVASNFHSFYNACRVKGEEENLMYARMILVDSTRLVIKNVLDVLSITAPEKM.

Positions 136–146 match the 'HIGH' region motif; the sequence is ANPTGPLHMGN.

The protein belongs to the class-I aminoacyl-tRNA synthetase family. In terms of assembly, monomer.

The protein resides in the cytoplasm. The catalysed reaction is tRNA(Arg) + L-arginine + ATP = L-arginyl-tRNA(Arg) + AMP + diphosphate. The chain is Arginine--tRNA ligase from Acetivibrio thermocellus (strain ATCC 27405 / DSM 1237 / JCM 9322 / NBRC 103400 / NCIMB 10682 / NRRL B-4536 / VPI 7372) (Clostridium thermocellum).